Consider the following 630-residue polypeptide: Ubiquitin carboxyl-terminal hydrolase MINDY-2 (630 aa).

The segment at 1–209 (MESGPESLQP…RVPEEEEGAA (209 aa)) is disordered. Positions 24–33 (GSPQEGQQET) are enriched in polar residues. The residue at position 94 (Ser94) is a Phosphoserine. Composition is skewed to low complexity over residues 141-163 (EESAAAGSSEPSSGGGLSSSCSD) and 170-191 (SPSLDSLESFSNLHSFPSSSEF). Residue Cys267 is the Nucleophile of the active site. Catalysis depends on His449, which acts as the Proton acceptor. The tract at residues 508–560 (GQQDQIDQDYLMALSLQQEQQSQEINWEQIPEGISDLELAKKLQEEEDRRASQ) is ubiquitin-binding domain (UBD). Over residues 564–599 (EQEQAAAAAASASASASASASTQAPQSQPVQASPSS) the composition is skewed to low complexity. A disordered region spans residues 564–630 (EQEQAAAAAA…EKEKNSCVIL (67 aa)). Positions 606 to 630 (SERKRKEPREKDKEKEKEKNSCVIL) are enriched in basic and acidic residues.

It belongs to the MINDY deubiquitinase family. FAM63 subfamily.

It catalyses the reaction Thiol-dependent hydrolysis of ester, thioester, amide, peptide and isopeptide bonds formed by the C-terminal Gly of ubiquitin (a 76-residue protein attached to proteins as an intracellular targeting signal).. Its function is as follows. Hydrolase that can remove 'Lys-48'-linked conjugated ubiquitin from proteins. Can also bind to polyubiquitin chains of different linkage types, including 'Lys-6', 'Lys-11', 'Lys-29', 'Lys-33' and 'Lys-63'. May play a regulatory role at the level of protein turnover. This Bos taurus (Bovine) protein is Ubiquitin carboxyl-terminal hydrolase MINDY-2 (MINDY2).